The primary structure comprises 471 residues: Trigger factor (471 aa).

The 96-residue stretch at 169–264 (GDVAVVDFKG…LKEIKEKELP (96 aa)) folds into the PPIase FKBP-type domain. The tract at residues 443 to 471 (SLASQESEITAPETEAETIEVTAESTTGE) is disordered. Over residues 448–471 (ESEITAPETEAETIEVTAESTTGE) the composition is skewed to low complexity.

This sequence belongs to the FKBP-type PPIase family. Tig subfamily.

The protein resides in the cytoplasm. It carries out the reaction [protein]-peptidylproline (omega=180) = [protein]-peptidylproline (omega=0). In terms of biological role, involved in protein export. Acts as a chaperone by maintaining the newly synthesized protein in an open conformation. Functions as a peptidyl-prolyl cis-trans isomerase. In Trichormus variabilis (strain ATCC 29413 / PCC 7937) (Anabaena variabilis), this protein is Trigger factor.